The following is a 182-amino-acid chain: ATP synthase subunit delta (182 aa).

This sequence belongs to the ATPase delta chain family. In terms of assembly, F-type ATPases have 2 components, F(1) - the catalytic core - and F(0) - the membrane proton channel. F(1) has five subunits: alpha(3), beta(3), gamma(1), delta(1), epsilon(1). CF(0) has four main subunits: a(1), b(1), b'(1) and c(10-14). The alpha and beta chains form an alternating ring which encloses part of the gamma chain. F(1) is attached to F(0) by a central stalk formed by the gamma and epsilon chains, while a peripheral stalk is formed by the delta, b and b' chains.

The protein localises to the cellular thylakoid membrane. F(1)F(0) ATP synthase produces ATP from ADP in the presence of a proton or sodium gradient. F-type ATPases consist of two structural domains, F(1) containing the extramembraneous catalytic core and F(0) containing the membrane proton channel, linked together by a central stalk and a peripheral stalk. During catalysis, ATP synthesis in the catalytic domain of F(1) is coupled via a rotary mechanism of the central stalk subunits to proton translocation. Its function is as follows. This protein is part of the stalk that links CF(0) to CF(1). It either transmits conformational changes from CF(0) to CF(1) or is implicated in proton conduction. This chain is ATP synthase subunit delta, found in Microcystis aeruginosa (strain NIES-843 / IAM M-2473).